A 131-amino-acid polypeptide reads, in one-letter code: MKSSATVVLLVAAVTAAMVMSSSASGDAVMIDEHNNIMTSVEGKRGIGSSVVANGGNRKMANVLLSGWENKCAGHGESCLGIGISGCCKGYYCSWPSGSICLCVPKGDPCGAMHTCCDGLSCTGFFSGDCV.

The signal sequence occupies residues 1–24; it reads MKSSATVVLLVAAVTAAMVMSSSA. The propeptide occupies 25-69; sequence SGDAVMIDEHNNIMTSVEGKRGIGSSVVANGGNRKMANVLLSGWE. Cystine bridges form between cysteine 72/cysteine 88, cysteine 79/cysteine 93, cysteine 87/cysteine 101, cysteine 103/cysteine 117, cysteine 110/cysteine 122, and cysteine 116/cysteine 130.

This sequence belongs to the urticatoxin-2 family. In terms of tissue distribution, expressed in trichomes, that are stiff epidermal hairs located on the surface of petioles and leaves.

The protein resides in the secreted. Its function is as follows. Plant defense neurotoxin that causes pain and systemic symptoms in mammals via modulation of voltage-gated sodium channels (Nav). Potent modulator of human Nav1.5/SCN5A (EC(50)=55 nM), Nav1.6/SCN8A (EC(50)=0.86 nM), and Nav1.7/SCN9A (EC(50)=208 nM), where it shifts the activation threshold to more negative potentials and delays fast inactivation. Also shifts the voltage-dependence of steady-state fast inactivation of Nav1.6/SCN8A, but not that of Nav1.5/SCN5A or Nav1.7/SCN9A. On Nav1.7/SCN9A, principally acts by binding to extracellular loops of domain IV (Nav site 3). In vivo, intraplantar injection into mice causes numerous dose-dependent, immediate, and long-lasting spontaneous pain behaviors, while no swelling is observed in the injected paw. At the highest doses tested, systemic symptoms including hypokinesia and hypersalivation are observed. The chain is Beta/delta-urticatoxin-Dm2a from Dendrocnide moroides (Gympie stinging tree).